Here is a 268-residue protein sequence, read N- to C-terminus: 4-hydroxy-tetrahydrodipicolinate reductase (268 aa).

Residue 7 to 12 coordinates NAD(+); sequence GANGRM. Position 34 (Arg-34) interacts with NADP(+). Residues 97–99 and 121–124 contribute to the NAD(+) site; these read GTT and SENM. The Proton donor/acceptor role is filled by His-155. His-156 is a (S)-2,3,4,5-tetrahydrodipicolinate binding site. Lys-159 acts as the Proton donor in catalysis. Position 165-166 (165-166) interacts with (S)-2,3,4,5-tetrahydrodipicolinate; that stretch reads GT.

It belongs to the DapB family.

It localises to the cytoplasm. It carries out the reaction (S)-2,3,4,5-tetrahydrodipicolinate + NAD(+) + H2O = (2S,4S)-4-hydroxy-2,3,4,5-tetrahydrodipicolinate + NADH + H(+). It catalyses the reaction (S)-2,3,4,5-tetrahydrodipicolinate + NADP(+) + H2O = (2S,4S)-4-hydroxy-2,3,4,5-tetrahydrodipicolinate + NADPH + H(+). The protein operates within amino-acid biosynthesis; L-lysine biosynthesis via DAP pathway; (S)-tetrahydrodipicolinate from L-aspartate: step 4/4. Its function is as follows. Catalyzes the conversion of 4-hydroxy-tetrahydrodipicolinate (HTPA) to tetrahydrodipicolinate. This is 4-hydroxy-tetrahydrodipicolinate reductase from Bartonella bacilliformis (strain ATCC 35685 / KC583 / Herrer 020/F12,63).